The sequence spans 376 residues: Ribonuclease D (376 aa).

In terms of domain architecture, 3'-5' exonuclease spans 8–176 (IQWIRDDASL…VYLALDARLS (169 aa)). In terms of domain architecture, HRDC spans 214–294 (RPQQLAVLRE…AEAARLPQSE (81 aa)).

The protein belongs to the RNase D family. Requires a divalent metal cation as cofactor.

It localises to the cytoplasm. It catalyses the reaction Exonucleolytic cleavage that removes extra residues from the 3'-terminus of tRNA to produce 5'-mononucleotides.. In terms of biological role, exonuclease involved in the 3' processing of various precursor tRNAs. Initiates hydrolysis at the 3'-terminus of an RNA molecule and releases 5'-mononucleotides. This Pseudomonas paraeruginosa (strain DSM 24068 / PA7) (Pseudomonas aeruginosa (strain PA7)) protein is Ribonuclease D.